We begin with the raw amino-acid sequence, 355 residues long: NADH-quinone oxidoreductase subunit H (355 aa).

Transmembrane regions (helical) follow at residues 25–45 (VVRILVVSVVILLCVAYLILW), 91–111 (WLYLIAPVMTVVPAFAVWAVI), 126–146 (LLYAMAISSIGVYAVILAGWA), 170–190 (MGFALVLVLMTAGSLNLSEIV), 205–225 (FLSWNWLPLLPAFVVYFISGI), 253–273 (MAFALFFLAEYINMIVISALA), 290–310 (FIPGIFWLVLKVFALLSVFIW), and 330–350 (VFLPVTVVWVIVVGFWMMSPL).

The protein belongs to the complex I subunit 1 family. NDH-1 is composed of 14 different subunits. Subunits NuoA, H, J, K, L, M, N constitute the membrane sector of the complex.

The protein resides in the cell inner membrane. It carries out the reaction a quinone + NADH + 5 H(+)(in) = a quinol + NAD(+) + 4 H(+)(out). NDH-1 shuttles electrons from NADH, via FMN and iron-sulfur (Fe-S) centers, to quinones in the respiratory chain. The immediate electron acceptor for the enzyme in this species is believed to be ubiquinone. Couples the redox reaction to proton translocation (for every two electrons transferred, four hydrogen ions are translocated across the cytoplasmic membrane), and thus conserves the redox energy in a proton gradient. This subunit may bind ubiquinone. This chain is NADH-quinone oxidoreductase subunit H, found in Burkholderia cenocepacia (strain HI2424).